The chain runs to 313 residues: Porphobilinogen deaminase (313 aa).

C242 is modified (S-(dipyrrolylmethanemethyl)cysteine).

This sequence belongs to the HMBS family. In terms of assembly, monomer. The cofactor is dipyrromethane.

The enzyme catalyses 4 porphobilinogen + H2O = hydroxymethylbilane + 4 NH4(+). The protein operates within porphyrin-containing compound metabolism; protoporphyrin-IX biosynthesis; coproporphyrinogen-III from 5-aminolevulinate: step 2/4. In terms of biological role, tetrapolymerization of the monopyrrole PBG into the hydroxymethylbilane pre-uroporphyrinogen in several discrete steps. The chain is Porphobilinogen deaminase from Yersinia pestis bv. Antiqua (strain Angola).